A 639-amino-acid chain; its full sequence is Chaperone protein DnaK (639 aa).

The residue at position 199 (Thr199) is a Phosphothreonine; by autocatalysis. The span at 602-613 (AQAQQAAAGAEG) shows a compositional bias: low complexity. Residues 602-639 (AQAQQAAAGAEGQPEDASAKQDDDVVDAEFEEVKDDKK) form a disordered region. Residues 625–639 (DVVDAEFEEVKDDKK) show a composition bias toward acidic residues.

It belongs to the heat shock protein 70 family.

In terms of biological role, acts as a chaperone. In Pseudoalteromonas atlantica (strain T6c / ATCC BAA-1087), this protein is Chaperone protein DnaK.